Reading from the N-terminus, the 483-residue chain is Protein PLASTID TRANSCRIPTIONALLY ACTIVE 14 (483 aa).

The transit peptide at 1–62 (MASSVSLQFL…TQPFPLFQSP (62 aa)) directs the protein to the chloroplast. An SET domain is found at 80 to 325 (YKIGYVRSVR…KGEEMTINYM (246 aa)). Tyr324 lines the S-adenosyl-L-methionine pocket.

The protein belongs to the class V-like SAM-binding methyltransferase superfamily. In terms of assembly, component of the transcriptionally active chromosome (TAC) complexes. Interacts with PTAC12/HMR/PAP5 and PTAC7. Binds to SL1/MTERF3. As to expression, mostly expressed in leaves, flowers and seedlings, and, to a lower extent, in stems and roots.

Its subcellular location is the plastid. It is found in the chloroplast thylakoid. Its function is as follows. Essential for chloroplast development, especially for thylakoid formation. Involved in plastid gene expression, probably by maintaining plastid-encoded RNA polymerase (PEP) activity. In Arabidopsis thaliana (Mouse-ear cress), this protein is Protein PLASTID TRANSCRIPTIONALLY ACTIVE 14.